Reading from the N-terminus, the 151-residue chain is Large ribosomal subunit protein bL9 (151 aa).

The protein belongs to the bacterial ribosomal protein bL9 family.

Its function is as follows. Binds to the 23S rRNA. In Chlorobium limicola (strain DSM 245 / NBRC 103803 / 6330), this protein is Large ribosomal subunit protein bL9.